Here is a 159-residue protein sequence, read N- to C-terminus: Protein hunchback (159 aa).

Positions 18 to 34 are enriched in basic residues; that stretch reads HNHHHHHHHGHHQHQQR. 2 disordered regions span residues 18-49 and 119-159; these read HNHHHHHHHGHHQHQQRHNSNSNASSPHQSPL and LTPP…KYMA. The segment covering 140–159 has biased composition (basic and acidic residues); that stretch reads EPEKEHDLMSNSSEDMKYMA.

Belongs to the hunchback C2H2-type zinc-finger protein family.

The protein localises to the nucleus. Its function is as follows. Gap class segmentation protein that controls development of head structures. The protein is Protein hunchback (hb) of Drosophila soonae (Fruit fly).